Reading from the N-terminus, the 349-residue chain is C-X-C chemokine receptor type 4 (349 aa).

Residues 1 to 18 form an important for chemokine binding and signaling region; it reads MEIYTSDNYSEEVGSGDY. The tract at residues 1-23 is disordered; it reads MEIYTSDNYSEEVGSGDYDSNKE. Topologically, residues 1 to 35 are extracellular; sequence MEIYTSDNYSEEVGSGDYDSNKEPCFRDENENFNR. N-linked (GlcNAc...) asparagine glycosylation is present at Asn-8. A Sulfotyrosine modification is found at Tyr-9. Residue Ser-15 is glycosylated (O-linked (Xyl...) (chondroitin sulfate) serine). Sulfotyrosine is present on Tyr-18. Cystine bridges form between Cys-25-Cys-271 and Cys-106-Cys-183. A helical membrane pass occupies residues 36-60; it reads IFLPTIYFIIFLTGIVGNGLVILVM. Residues 61-74 are Cytoplasmic-facing; that stretch reads GYQKKLRSMTDKYR. Residues 75-96 traverse the membrane as a helical segment; that stretch reads LHLSVADLLFVITLPFWAVDAM. The interval 91–94 is chemokine binding; it reads WAVD. Residues 97-107 lie on the Extracellular side of the membrane; it reads ADWYFGKFLCK. Residues 108–127 form a helical membrane-spanning segment; the sequence is AVHIIYTVNLYSSVLILAFI. Positions 110 to 114 are chemokine binding; that stretch reads HIIYT. Topologically, residues 128–151 are cytoplasmic; sequence SLDRYLAIVHATNSQRPRKLLAEK. The short motif at 130–132 is the Important for signaling element; it reads DRY. The interval 132-144 is involved in dimerization; when bound to chemokine; the sequence is YLAIVHATNSQRP. Residues 152–171 form a helical membrane-spanning segment; sequence AVYVGVWIPALLLTIPDIIF. Over 172 to 192 the chain is Extracellular; it reads ADVSQGDGRYICDRLYPDSLW. Positions 183–187 are chemokine binding, important for signaling; the sequence is CDRLY. The involved in dimerization stretch occupies residues 188 to 207; that stretch reads PDSLWMVVFQFQHIMVGLIL. A helical transmembrane segment spans residues 193-213; that stretch reads MVVFQFQHIMVGLILPGIVIL. Residues 214 to 238 are Cytoplasmic-facing; that stretch reads SCYCIIISKLSHSKGHQKRKALKTT. Residues 239–258 traverse the membrane as a helical segment; sequence VILILAFFACWLPYYVGISI. At 259 to 279 the chain is on the extracellular side; the sequence is DSFILLEVIKQGCEFESVVHK. The tract at residues 263 to 265 is involved in dimerization; sequence LLE. The helical transmembrane segment at 280 to 299 threads the bilayer; sequence WISITEALAFFHCCLNPILY. The Cytoplasmic portion of the chain corresponds to 300 to 349; it reads AFLGAKFKSSAQHALNSMSRGSSLKILSKGKRGGHSSVSTESESSSFHSS. Residues Ser-316 and Ser-318 each carry the phosphoserine modification. Ser-321 and Ser-322 each carry phosphoserine; by PKC and GRK6. Positions 325 to 349 are disordered; that stretch reads ILSKGKRGGHSSVSTESESSSFHSS. Ser-327 is modified (phosphoserine; by GRK6). Residue Lys-328 forms a Glycyl lysine isopeptide (Lys-Gly) (interchain with G-Cter in ubiquitin) linkage. Residues 334–349 are compositionally biased toward low complexity; sequence HSSVSTESESSSFHSS. Ser-336 is modified (phosphoserine; by GRK6). Ser-345 and Ser-348 each carry phosphoserine.

The protein belongs to the G-protein coupled receptor 1 family. Monomer. Can form homodimers. Interacts with CD164. Interacts with ARRB2; the interaction is dependent on the C-terminal phosphorylation of CXCR4 and allows activation of MAPK1 and MAPK3. Interacts with ARR3; the interaction is dependent on the C-terminal phosphorylation of CXCR4 and modulates calcium mobilization. Interacts with RNF113A; the interaction, enhanced by CXCL12, promotes CXCR4 ubiquitination and subsequent degradation. Interacts (via the cytoplasmic C-terminal) with ITCH (via the WW domains I and II); the interaction, enhanced by CXCL12, promotes CXCR4 ubiquitination and leads to its degradation. Interacts with extracellular ubiquitin. Interacts with DBN1; this interaction is enhanced by antigenic stimulation. Following LPS binding, may form a complex with GDF5, HSP90AA1 and HSPA8. Phosphorylated on agonist stimulation. Rapidly phosphorylated on serine and threonine residues in the C-terminal. Phosphorylation at Ser-321 and Ser-322 leads to recruitment of ITCH, ubiquitination and protein degradation. In terms of processing, ubiquitinated after ligand binding, leading to its degradation. Ubiquitinated by ITCH at the cell membrane on agonist stimulation. The ubiquitin-dependent mechanism, endosomal sorting complex required for transport (ESCRT), then targets CXCR4 for lysosomal degradation. This process is dependent also on prior Ser-/Thr-phosphorylation in the C-terminal of CXCR4. Also binding of ARRB1 to STAM negatively regulates CXCR4 sorting to lysosomes though modulating ubiquitination of SFR5S. Post-translationally, sulfation is required for efficient binding of CXCL12/SDF-1alpha and promotes its dimerization. O- and N-glycosylated. N-glycosylation can mask coreceptor function. The O-glycosylation chondroitin sulfate attachment does not affect interaction with CXCL12/SDF-1alpha nor its coreceptor activity.

It is found in the cell membrane. It localises to the cell junction. The protein localises to the early endosome. The protein resides in the late endosome. Its subcellular location is the lysosome. Its function is as follows. Receptor for the C-X-C chemokine CXCL12/SDF-1 that transduces a signal by increasing intracellular calcium ion levels and enhancing MAPK1/MAPK3 activation. Involved in the AKT signaling cascade. Plays a role in regulation of cell migration, e.g. during wound healing. Acts as a receptor for extracellular ubiquitin; leading to enhanced intracellular calcium ions and reduced cellular cAMP levels. Binds bacterial lipopolysaccharide (LPS) et mediates LPS-induced inflammatory response, including TNF secretion by monocytes. Involved in hematopoiesis and in cardiac ventricular septum formation. Also plays an essential role in vascularization of the gastrointestinal tract, probably by regulating vascular branching and/or remodeling processes in endothelial cells. Involved in cerebellar development. In the CNS, could mediate hippocampal-neuron survival. The protein is C-X-C chemokine receptor type 4 (Cxcr4) of Rattus norvegicus (Rat).